The chain runs to 62 residues: Photosystem II reaction center protein Z (62 aa).

The next 2 membrane-spanning stretches (helical) occupy residues 8–28 (AVFALIATSSILLISVPVVFA) and 41–61 (FSGTSLWIGLVFLVGILNSLI).

Belongs to the PsbZ family. In terms of assembly, PSII is composed of 1 copy each of membrane proteins PsbA, PsbB, PsbC, PsbD, PsbE, PsbF, PsbH, PsbI, PsbJ, PsbK, PsbL, PsbM, PsbT, PsbY, PsbZ, Psb30/Ycf12, at least 3 peripheral proteins of the oxygen-evolving complex and a large number of cofactors. It forms dimeric complexes.

It is found in the plastid. The protein localises to the chloroplast thylakoid membrane. Its function is as follows. May control the interaction of photosystem II (PSII) cores with the light-harvesting antenna, regulates electron flow through the 2 photosystem reaction centers. PSII is a light-driven water plastoquinone oxidoreductase, using light energy to abstract electrons from H(2)O, generating a proton gradient subsequently used for ATP formation. This chain is Photosystem II reaction center protein Z, found in Gossypium barbadense (Sea Island cotton).